The primary structure comprises 182 residues: ATP-dependent protease subunit HslV (182 aa).

T12 is a catalytic residue. A167, C170, and T173 together coordinate Na(+).

Belongs to the peptidase T1B family. HslV subfamily. In terms of assembly, a double ring-shaped homohexamer of HslV is capped on each side by a ring-shaped HslU homohexamer. The assembly of the HslU/HslV complex is dependent on binding of ATP.

The protein resides in the cytoplasm. It catalyses the reaction ATP-dependent cleavage of peptide bonds with broad specificity.. Allosterically activated by HslU binding. Its function is as follows. Protease subunit of a proteasome-like degradation complex believed to be a general protein degrading machinery. The sequence is that of ATP-dependent protease subunit HslV from Pelodictyon phaeoclathratiforme (strain DSM 5477 / BU-1).